A 91-amino-acid chain; its full sequence is Small ribosomal subunit protein uS19 (91 aa).

The protein belongs to the universal ribosomal protein uS19 family.

Functionally, protein S19 forms a complex with S13 that binds strongly to the 16S ribosomal RNA. The protein is Small ribosomal subunit protein uS19 of Acinetobacter baumannii (strain AB307-0294).